We begin with the raw amino-acid sequence, 159 residues long: 2-C-methyl-D-erythritol 2,4-cyclodiphosphate synthase (159 aa).

Residues Asp8 and His10 each contribute to the a divalent metal cation site. Residues 8–10 (DVH) and 34–35 (HS) contribute to the 4-CDP-2-C-methyl-D-erythritol 2-phosphate site. His42 contacts a divalent metal cation. Residues 56–58 (DIG), 61–65 (FPDTD), 100–106 (AQAPKML), 132–135 (TTTE), Phe139, and Arg142 each bind 4-CDP-2-C-methyl-D-erythritol 2-phosphate.

The protein belongs to the IspF family. Homotrimer. A divalent metal cation is required as a cofactor.

The catalysed reaction is 4-CDP-2-C-methyl-D-erythritol 2-phosphate = 2-C-methyl-D-erythritol 2,4-cyclic diphosphate + CMP. It participates in isoprenoid biosynthesis; isopentenyl diphosphate biosynthesis via DXP pathway; isopentenyl diphosphate from 1-deoxy-D-xylulose 5-phosphate: step 4/6. Functionally, involved in the biosynthesis of isopentenyl diphosphate (IPP) and dimethylallyl diphosphate (DMAPP), two major building blocks of isoprenoid compounds. Catalyzes the conversion of 4-diphosphocytidyl-2-C-methyl-D-erythritol 2-phosphate (CDP-ME2P) to 2-C-methyl-D-erythritol 2,4-cyclodiphosphate (ME-CPP) with a corresponding release of cytidine 5-monophosphate (CMP). In Salmonella choleraesuis (strain SC-B67), this protein is 2-C-methyl-D-erythritol 2,4-cyclodiphosphate synthase.